The following is an 892-amino-acid chain: Translation initiation factor IF-2 (892 aa).

The interval 88-305 is disordered; it reads KKRTFVKRDP…SLQQGFQKPA (218 aa). Basic and acidic residues-rich tracts occupy residues 93 to 159 and 166 to 216; these read VKRD…KDKV and DMTK…EENK. Positions 254 to 269 are enriched in basic residues; that stretch reads GRGRNAKAARPAKKGK. Positions 270–282 are enriched in basic and acidic residues; the sequence is HAESKADREEARA. The region spanning 391–560 is the tr-type G domain; that stretch reads PRAPVVTIMG…LLQAEVLELK (170 aa). The segment at 400–407 is G1; that stretch reads GHVDHGKT. 400–407 is a GTP binding site; it reads GHVDHGKT. Residues 425–429 form a G2 region; that stretch reads GITQH. Positions 446-449 are G3; that stretch reads DTPG. GTP-binding positions include 446-450 and 500-503; these read DTPGH and NKID. Positions 500–503 are G4; sequence NKID. The tract at residues 536 to 538 is G5; the sequence is SAK.

It belongs to the TRAFAC class translation factor GTPase superfamily. Classic translation factor GTPase family. IF-2 subfamily.

It localises to the cytoplasm. In terms of biological role, one of the essential components for the initiation of protein synthesis. Protects formylmethionyl-tRNA from spontaneous hydrolysis and promotes its binding to the 30S ribosomal subunits. Also involved in the hydrolysis of GTP during the formation of the 70S ribosomal complex. The chain is Translation initiation factor IF-2 from Salmonella agona (strain SL483).